The sequence spans 351 residues: Probable cell division control protein 7 homolog 1 (351 aa).

Residues 21 to 341 form the Protein kinase domain; sequence YTPIEKIGEG…ASDALSHPFF (321 aa). Residues 27-35 and lysine 50 contribute to the ATP site; that span reads IGEGSFSVV. Catalysis depends on aspartate 137, which acts as the Proton acceptor.

This sequence belongs to the protein kinase superfamily. Ser/Thr protein kinase family. CDC7 subfamily. Mg(2+) is required as a cofactor.

It catalyses the reaction L-seryl-[protein] + ATP = O-phospho-L-seryl-[protein] + ADP + H(+). The enzyme catalyses L-threonyl-[protein] + ATP = O-phospho-L-threonyl-[protein] + ADP + H(+). In terms of biological role, serine/threonine-protein kinase. Needed for the initiation of DNA synthesis during mitosis as well as for synaptonemal complex formation and commitment to recombination during meiosis. In Encephalitozoon cuniculi (strain GB-M1) (Microsporidian parasite), this protein is Probable cell division control protein 7 homolog 1 (CDC7-1).